Reading from the N-terminus, the 251-residue chain is Small ribosomal subunit protein uS3 (251 aa).

Positions 39 to 109 (IRNYVQARLK…EVKIDVIEVI (71 aa)) constitute a KH type-2 domain. Residues 222–239 (LKKIKDRRGEQRSRGRDS) show a composition bias toward basic and acidic residues. The tract at residues 222–251 (LKKIKDRRGEQRSRGRDSRNRRRRKPRQTT) is disordered. Basic residues predominate over residues 240 to 251 (RNRRRRKPRQTT).

It belongs to the universal ribosomal protein uS3 family. In terms of assembly, part of the 30S ribosomal subunit. Forms a tight complex with proteins S10 and S14.

In terms of biological role, binds the lower part of the 30S subunit head. Binds mRNA in the 70S ribosome, positioning it for translation. This chain is Small ribosomal subunit protein uS3, found in Prosthecochloris aestuarii (strain DSM 271 / SK 413).